The chain runs to 447 residues: Rab GDP dissociation inhibitor alpha (447 aa).

S427 bears the Phosphoserine mark.

The protein belongs to the Rab GDI family. Interacts with RHOH. Interacts with the non-phosphorylated forms of RAB1A, RAB3A, RAB5A, RAB5B, RAB5C, RAB8A, RAB8B, RAB10, RAB12, RAB35, and RAB43. Interacts with RAB3A.

It localises to the cytoplasm. The protein resides in the golgi apparatus. It is found in the trans-Golgi network. Regulates the GDP/GTP exchange reaction of most Rab proteins by inhibiting the dissociation of GDP from them, and the subsequent binding of GTP to them. Promotes the dissociation of GDP-bound Rab proteins from the membrane and inhibits their activation. Promotes the dissociation of RAB1A, RAB3A, RAB5A and RAB10 from membranes. The protein is Rab GDP dissociation inhibitor alpha (GDI1) of Bos taurus (Bovine).